We begin with the raw amino-acid sequence, 237 residues long: Uridylate kinase (237 aa).

K12–G15 is an ATP binding site. G54 lines the UMP pocket. ATP is bound by residues G55 and R59. Residues D72 and T133–T140 each bind UMP. Residues Y166 and D169 each coordinate ATP.

This sequence belongs to the UMP kinase family. In terms of assembly, homohexamer.

It is found in the cytoplasm. It catalyses the reaction UMP + ATP = UDP + ADP. It functions in the pathway pyrimidine metabolism; CTP biosynthesis via de novo pathway; UDP from UMP (UMPK route): step 1/1. With respect to regulation, inhibited by UTP. Catalyzes the reversible phosphorylation of UMP to UDP. The polypeptide is Uridylate kinase (Caldanaerobacter subterraneus subsp. tengcongensis (strain DSM 15242 / JCM 11007 / NBRC 100824 / MB4) (Thermoanaerobacter tengcongensis)).